The sequence spans 363 residues: Dihydroorotate dehydrogenase (quinone) (363 aa).

FMN is bound by residues 62–66 (AGYDK) and Thr86. Position 66 (Lys66) interacts with substrate. 111–115 (NRLGF) contacts substrate. FMN is bound by residues Asn139 and Asn170. Substrate is bound at residue Asn170. Residue Ser173 is the Nucleophile of the active site. A substrate-binding site is contributed by Asn175. Positions 215 and 243 each coordinate FMN. 244–245 (NT) contacts substrate. Residues Gly266, Gly295, and 316–317 (YS) contribute to the FMN site.

Belongs to the dihydroorotate dehydrogenase family. Type 2 subfamily. Monomer. It depends on FMN as a cofactor.

It is found in the cell membrane. It carries out the reaction (S)-dihydroorotate + a quinone = orotate + a quinol. The protein operates within pyrimidine metabolism; UMP biosynthesis via de novo pathway; orotate from (S)-dihydroorotate (quinone route): step 1/1. Catalyzes the conversion of dihydroorotate to orotate with quinone as electron acceptor. This is Dihydroorotate dehydrogenase (quinone) from Agrobacterium fabrum (strain C58 / ATCC 33970) (Agrobacterium tumefaciens (strain C58)).